The chain runs to 516 residues: MERQPASTGSRQELGRLLEAVLSNRGRANAVFDILAVLQSEDPEEIKEGVRTCSRLFGTLLEREELFVGSLPCEDMALAGSQGATYKYKVWMRHRYHSCCNRLEELLTHPSFQVKELALETLMKFVQLEGAKPLEKPQWESHYLFPRTLFRAVVGGLLTPEDDHSLLISQFCEYLEYDDIRYHAMQVATSILARATSRQPEVSLTFWNNAFTLLSAVNLPLQEHELTNFYVKHAQTSSKWKVVHLKEQRKAFQEMWLGFLKHKLPLSLYKKVLVAMHDSILPHLAQPTLMIDFLTSACDVGGAISLLALNGLFILIHKHNLEYPDFYQRLYGLLDPSIFHVKYRARFFHLADLFLSSSHLPAYLVAAFAKRLARLALTAPPEALLMVLPLICNLLRRHPACRVMVHRPQGPELDADPYDPTEKDPARSRALESCLWELQTLQQHYHPEVSRAASVINQALSVPEVSIAPLLELTAYEIFEQDLKKMMPESVPLEFIPAKGLLGRQDDLCTQFFCLS.

Helical transmembrane passes span 296-316 (SACDVGGAISLLALNGLFILI), 347-367 (FFHLADLFLSSSHLPAYLVAA), and 375-395 (LALTAPPEALLMVLPLICNLL).

It belongs to the CBF/MAK21 family.

It localises to the nucleus membrane. The protein localises to the nucleus. Its subcellular location is the nucleolus. The sequence is that of Nucleolar complex protein 4 homolog (Noc4l) from Rattus norvegicus (Rat).